A 394-amino-acid chain; its full sequence is Protein maelstrom (394 aa).

The HMG box DNA-binding region spans 2-69; it reads APKKQNGFMM…ARRDKRGSLN (68 aa). The segment at 44–93 is disordered; that stretch reads TQQRGPYNSDAKDANAARRDKRGSLNGHGQVDKAQREAAESLMDKAQREA. Residues 73 to 93 show a composition bias toward basic and acidic residues; the sequence is QVDKAQREAAESLMDKAQREA.

This sequence belongs to the maelstrom family.

Its subcellular location is the cytoplasm. The protein localises to the nucleus. Involved both in the piRNA and miRNA metabolic processes. As a component of the meiotic nuage, plays a central role during oogenesis by repressing transposable elements and preventing their mobilization, which is essential for the germline integrity. Repression of transposable elements is mediated via the piRNA metabolic process, which mediates the repression of transposable elements during meiosis by forming complexes composed of piRNAs and Piwi proteins and governs the repression of transposons. As a nuclear component, it is required for proper differentiation in the germline stem cell (GSC) lineage by repressing microRNA-7 (miR-7), thereby acting as an indirect regulator of bag-of-marbles (Bam). Acts by binding to the promoter of miR-7 gene and repressing its expression; miR-7 repression alleviates the Bam repression by miR-7, thereby allowing differentiation in the germline stem cell (GSC) lineage. The polypeptide is Protein maelstrom (mael) (Drosophila sechellia (Fruit fly)).